The sequence spans 426 residues: MLDAKYVKDNLQQVAEKLATRGYQFDIAEFEAQEQKRKHLQERTQDLQSQRNTISKEIGQKKAKGEDTSDIFAKVNQINEELKIIEKELKDLQDTINQTLLSMPNLPADDVPVGKDENDNVEIRRWGTPREFHPEAPAKDHSDIGEILKMIDFKAAAKVTGSRFMVLKNKIAKLHRALSQFMLDLHTEKHGYEELYVPYLVNNDSLYGTGQLPKFAANLFKLEGDFEYSLIPTAEVPITNLVRDEILDTETLPRYYTAHTPCFRSEAGSYGRDTKGMIRQHQFEKVELVHITTADKGEESLELLTSHAEKVLQKLNLPYRVMKLCTGDMGFSAKKTYDLEVWLPSQNTYREISSCSWCGDFQARRMKARHKNPSMKKPELVHTLNGSGLAVGRTLLAIIENYQQEDGSIMVPDALIKYMGGISVIK.

Residues 36–66 (KRKHLQERTQDLQSQRNTISKEIGQKKAKGE) form a disordered region. Over residues 46-55 (DLQSQRNTIS) the composition is skewed to polar residues. Residue 233–235 (TAE) participates in L-serine binding. 264–266 (RSE) lines the ATP pocket. Glutamate 287 is an L-serine binding site. 351–354 (EISS) contributes to the ATP binding site. Serine 387 is an L-serine binding site.

It belongs to the class-II aminoacyl-tRNA synthetase family. Type-1 seryl-tRNA synthetase subfamily. As to quaternary structure, homodimer. The tRNA molecule binds across the dimer.

Its subcellular location is the cytoplasm. The enzyme catalyses tRNA(Ser) + L-serine + ATP = L-seryl-tRNA(Ser) + AMP + diphosphate + H(+). It carries out the reaction tRNA(Sec) + L-serine + ATP = L-seryl-tRNA(Sec) + AMP + diphosphate + H(+). The protein operates within aminoacyl-tRNA biosynthesis; selenocysteinyl-tRNA(Sec) biosynthesis; L-seryl-tRNA(Sec) from L-serine and tRNA(Sec): step 1/1. Its function is as follows. Catalyzes the attachment of serine to tRNA(Ser). Is also able to aminoacylate tRNA(Sec) with serine, to form the misacylated tRNA L-seryl-tRNA(Sec), which will be further converted into selenocysteinyl-tRNA(Sec). The polypeptide is Serine--tRNA ligase (Francisella tularensis subsp. holarctica (strain FTNF002-00 / FTA)).